The primary structure comprises 79 residues: UPF0181 protein PC1_1931 (79 aa).

Residues 54-79 (FDEDDDTVNDSDEEHYFDDGEEEDEQ) are disordered.

This sequence belongs to the UPF0181 family.

The protein is UPF0181 protein PC1_1931 of Pectobacterium carotovorum subsp. carotovorum (strain PC1).